A 468-amino-acid polypeptide reads, in one-letter code: Cysteine--tRNA ligase (468 aa).

Cysteine 29 is a Zn(2+) binding site. A 'HIGH' region motif is present at residues 31–41 (PTVYNYIHIGN). Residues cysteine 209, histidine 234, and glutamate 238 each contribute to the Zn(2+) site. Positions 266–270 (KMSKS) match the 'KMSKS' region motif. Residue lysine 269 participates in ATP binding.

This sequence belongs to the class-I aminoacyl-tRNA synthetase family. As to quaternary structure, monomer. Zn(2+) serves as cofactor.

It is found in the cytoplasm. The enzyme catalyses tRNA(Cys) + L-cysteine + ATP = L-cysteinyl-tRNA(Cys) + AMP + diphosphate. The sequence is that of Cysteine--tRNA ligase from Brevibacillus brevis (strain 47 / JCM 6285 / NBRC 100599).